The following is a 397-amino-acid chain: Acetate kinase (397 aa).

A Mg(2+)-binding site is contributed by Asn-8. Lys-15 contributes to the ATP binding site. Arg-89 lines the substrate pocket. Asp-146 serves as the catalytic Proton donor/acceptor. Residues 206–210 (HLGNG), 281–283 (DLR), and 329–333 (GIGEN) each bind ATP. Glu-382 lines the Mg(2+) pocket.

It belongs to the acetokinase family. Homodimer. Mg(2+) serves as cofactor. Requires Mn(2+) as cofactor.

It is found in the cytoplasm. It catalyses the reaction acetate + ATP = acetyl phosphate + ADP. The protein operates within metabolic intermediate biosynthesis; acetyl-CoA biosynthesis; acetyl-CoA from acetate: step 1/2. In terms of biological role, catalyzes the formation of acetyl phosphate from acetate and ATP. Can also catalyze the reverse reaction. The polypeptide is Acetate kinase (Anoxybacillus flavithermus (strain DSM 21510 / WK1)).